The sequence spans 88 residues: UPF0297 protein SSA_2241 (88 aa).

Belongs to the UPF0297 family.

The chain is UPF0297 protein SSA_2241 from Streptococcus sanguinis (strain SK36).